Reading from the N-terminus, the 564-residue chain is Alpha-amylase 3 (564 aa).

The first 21 residues, 1-21 (MFGVYFVLLFLSSALIHVANA), serve as a signal peptide directing secretion. Cysteines 51 and 59 form a disulfide. Positions 56 and 105 each coordinate substrate. Asn143 contributes to the Ca(2+) binding site. An intrachain disulfide couples Cys172 to Cys188. Asn181 carries an N-linked (GlcNAc...) asparagine glycan. Residue Asp198 coordinates Ca(2+). Arg227 contacts substrate. Asp229 serves as a coordination point for Ca(2+). Catalysis depends on Asp229, which acts as the Nucleophile. 232–233 (KM) provides a ligand contact to substrate. N-linked (GlcNAc...) asparagine glycosylation occurs at Asn235. Glu253 contributes to the Ca(2+) binding site. Glu253 serves as the catalytic Proton donor. An intrachain disulfide couples Cys263 to Cys306. N-linked (GlcNAc...) asparagine glycans are attached at residues Asn282 and Asn305. Substrate-binding residues include Asp322 and Arg369. Asn438, Asn447, and Asn498 each carry an N-linked (GlcNAc...) asparagine glycan. The GPI-anchor amidated serine moiety is linked to residue Ser538. Residues 539–564 (SSRLILSFKTLVFGLGVTAMLFVLFF) constitute a propeptide, removed in mature form.

The protein belongs to the glycosyl hydrolase 13 family. It depends on Ca(2+) as a cofactor. N-glycosylated.

Its subcellular location is the cell membrane. It catalyses the reaction Endohydrolysis of (1-&gt;4)-alpha-D-glucosidic linkages in polysaccharides containing three or more (1-&gt;4)-alpha-linked D-glucose units.. Has a role in cell wall biosynthesis where it is involved in maintaining cell wall strength and shape. The chain is Alpha-amylase 3 (aah3) from Schizosaccharomyces pombe (strain 972 / ATCC 24843) (Fission yeast).